The primary structure comprises 424 residues: MKIEMICTGEEVLSGQIVDTNAAWAANALMDHGIEMQQRITVGDRLDDLVEVFRQRSEHADVILVNGGLGPTSDDMSSEAMAIAKGEPLVECTLWRERIQEWFTRNGRHMPESNLKQAMLPASAIMVDNPVGTACGFRVKLNRAWLFFTPGVPFEFKKMVTEQFIPFVEQIADSHIEVEVQKLLTIGQGESALADKLEGMPLPDGMTLGYRSFMPYIEIKLFARGEAAIGELDRVKAEVLTRLGDAVVGHNVASLAQVIHNGLLASGKRLSIAESCTGGMIANNLVAFAGSSNYLDQGLVTYSNESKVRVLGVKPATLDDHGAVSIATVEEMAKGARGLLDSDYALATSGIAGPDGGSEAKPVGTVAIALATRQGVYSQMLKFPARSRELVRQLSTAVALDMLRRELQESPVLVDYSSYPRFAR.

Belongs to the CinA family.

In Shewanella loihica (strain ATCC BAA-1088 / PV-4), this protein is CinA-like protein.